The chain runs to 267 residues: NAD kinase (267 aa).

D52 serves as the catalytic Proton acceptor. Residues D52–G53, R57, N121–E122, R132, K150, D152, T163–S168, and A187 contribute to the NAD(+) site.

It belongs to the NAD kinase family. A divalent metal cation serves as cofactor.

It localises to the cytoplasm. It carries out the reaction NAD(+) + ATP = ADP + NADP(+) + H(+). Its function is as follows. Involved in the regulation of the intracellular balance of NAD and NADP, and is a key enzyme in the biosynthesis of NADP. Catalyzes specifically the phosphorylation on 2'-hydroxyl of the adenosine moiety of NAD to yield NADP. The polypeptide is NAD kinase (Fusobacterium nucleatum subsp. nucleatum (strain ATCC 25586 / DSM 15643 / BCRC 10681 / CIP 101130 / JCM 8532 / KCTC 2640 / LMG 13131 / VPI 4355)).